Consider the following 439-residue polypeptide: Protein pop-1 (439 aa).

The tract at residues 1 to 38 is disordered; that stretch reads MMADEELGDEVKVFRRDEDADDDPMISGETSEQQLADD. Positions 9–18 are enriched in basic and acidic residues; sequence DEVKVFRRDE. The involved in nuclear asymmetry stretch occupies residues 87-138; sequence SGLPIMFPMVVPQYLSPNPNINMMNMMTMRAAMAGAPLSPAFPAMFSPNPLF. Serine 125 is modified (phosphoserine; by LIT1). The segment at residues 199-269 is a DNA-binding region (HMG box); it reads IKKPLNAFMW…SHKEKYPQWS (71 aa). Residues 254–265 are compositionally biased toward basic and acidic residues; it reads AKKDRESHKEKY. Disordered regions lie at residues 254–298, 329–365, and 385–439; these read AKKD…NNDQ, RSGSELNDGHDGRGTSGGCSSSSESSSPNNNQPMPMN, and SAHL…VCTL. A compositionally biased stretch (basic residues) spans 277–286; it reads NKKKPKRKRD. Low complexity-rich tracts occupy residues 346-365 and 385-400; these read GCSSSSESSSPNNNQPMPMN and SAHLASSHSTGSSGTS. Acidic residues predominate over residues 409-420; the sequence is SESDVDEDEDID. Residues 422 to 439 are compositionally biased toward polar residues; sequence TITQQTQEYIMQESVCTL.

The protein belongs to the TCF/LEF family. Interacts with hda-1. Interacts with bar-1. Interacts with par-5; the interaction is direct and is enhanced by lit-1-mediated pop-1 phosphorylation. The interaction also leads to the subsequent nuclear export of pop-1. Interacts (when phosphorylated on Ser-125) with lit-1; the interaction is dependent on the beta-catenin-lit-1 complex. Interacts with wrm-1. Post-translationally, phosphorylated on Ser-125 by lit-1 in the beta-catenin-lit-1 complex. Phosphorylation promotes the interaction of pop-1 and par-5 and the subsequent translocation of pop-1 from the nucleus to the cytoplasm.

Its subcellular location is the nucleus. It is found in the cytoplasm. Functionally, part of the Wnt signaling pathway essential for the specification of the mesodermal cell fate in early embryos. Required for asymmetrical division of somatic gonadal precursor descendants which initiate axis formation required to control organ shape. Similarly, involved in asymmetrical division of seam cells, a stem cell-like lineage. Represses expression of target genes via its interaction with hda-1 histone deacetylase. Required for specification of the M lineage-derived coelomocyte and sex myoblast fate. Regulates coelomocyte fate by positively regulating proliferation and ceh-34 and possibly eya-1 expression in M.dlpa and M.drpa precursors. The polypeptide is Protein pop-1 (Caenorhabditis briggsae).